A 261-amino-acid polypeptide reads, in one-letter code: DNA oxidative demethylase ALKBH2 (261 aa).

Positions 1–57 (MDRFLVKGAQGGLLRKQEEQEPTGEEPAVLGGDKESTRKRPRREAPGNGGHSAGPSW) are disordered. The PCNA-binding signature appears at 3 to 7 (RFLVK). Residues 102–104 (FGK) and 122–124 (YTF) each bind substrate. The Fe2OG dioxygenase domain occupies 152–257 (TFNFVLINRY…RVNLTFRKIL (106 aa)). 2-oxoglutarate is bound by residues asparagine 159, tyrosine 161, and histidine 171. Residues histidine 171 and aspartate 173 each contribute to the Fe cation site. Aspartate 174 provides a ligand contact to substrate. 2-oxoglutarate is bound by residues histidine 236, arginine 248, threonine 252, and arginine 254. Histidine 236 contributes to the Fe cation binding site.

It belongs to the alkB family. In terms of assembly, interacts with PCNA homotrimer; this interaction is enhanced during the S-phase of the cell cycle. Interacts with nucleolar proteins NCL, UBTF and NPM1. Interacts with XRCC5-XRCC6 heterodimer. The cofactor is Fe(2+). In terms of tissue distribution, detected in colon, small intestine, ovary, testis, prostate, skeletal muscle, heart, liver and urinary bladder.

It is found in the nucleus. Its subcellular location is the nucleolus. The protein localises to the nucleoplasm. It carries out the reaction a methylated nucleobase within DNA + 2-oxoglutarate + O2 = a nucleobase within DNA + formaldehyde + succinate + CO2. The enzyme catalyses an N(1)-methyl-2'-deoxyadenosine in double-stranded DNA + 2-oxoglutarate + O2 = a 2'-deoxyadenosine in double-stranded DNA + formaldehyde + succinate + CO2 + H(+). It catalyses the reaction an N(1)-methyl-2'-deoxyadenosine in single-stranded DNA + 2-oxoglutarate + O2 = a 2'-deoxyadenosine in single-stranded DNA + formaldehyde + succinate + CO2 + H(+). The catalysed reaction is an N(3)-methyl-2'-deoxycytidine in double-stranded DNA + 2-oxoglutarate + O2 = a 2'-deoxycytidine in double-stranded DNA + formaldehyde + succinate + CO2 + H(+). It carries out the reaction an N(3)-methyl-2'-deoxycytidine in single-stranded DNA + 2-oxoglutarate + O2 = a 2'-deoxycytidine in single-stranded DNA + formaldehyde + succinate + CO2 + H(+). The enzyme catalyses a 1,N(6)-etheno-2'-deoxyadenosine in double-stranded DNA + 2-oxoglutarate + O2 + H2O = a 2'-deoxyadenosine in double-stranded DNA + glyoxal + succinate + CO2. It catalyses the reaction a 1,N(6)-etheno-2'-deoxyadenosine in single-stranded DNA + 2-oxoglutarate + O2 + H2O = a 2'-deoxyadenosine in single-stranded DNA + glyoxal + succinate + CO2. The catalysed reaction is a 3,N(4)-etheno-2'-deoxycytidine in double-stranded DNA + 2-oxoglutarate + O2 + H2O = a 2'-deoxycytidine in double-stranded DNA + glyoxal + succinate + CO2. It carries out the reaction a 3,N(4)-etheno-2'-deoxycytidine in single-stranded DNA + 2-oxoglutarate + O2 + H2O = a 2'-deoxycytidine in single-stranded DNA + glyoxal + succinate + CO2. The enzyme catalyses a 1,N(2)-etheno-2'-deoxyguanosine in double-stranded DNA + 2-oxoglutarate + O2 + H2O = a 2'-deoxyguanosine in double-stranded DNA + glyoxal + succinate + CO2. Activated by ascorbate and magnesium ions. Functionally, dioxygenase that repairs alkylated nucleic acid bases by direct reversal oxidative dealkylation. Can process both double-stranded (ds) and single-stranded (ss) DNA substrates, with a strong preference for dsDNA. Uses molecular oxygen, 2-oxoglutarate and iron as cofactors to oxidize the alkyl groups that are subsequently released as aldehydes, regenerating the undamaged bases. Probes the base pair stability, locates a weakened base pair and flips the damaged base to accommodate the lesion in its active site for efficient catalysis. Repairs monoalkylated bases, specifically N1-methyladenine and N3-methylcytosine, as well as higher order alkyl adducts such as bases modified with exocyclic bridged adducts known as etheno adducts including 1,N6-ethenoadenine, 3,N4-ethenocytosine and 1,N2-ethenoguanine. Acts as a gatekeeper of genomic integrity under alkylation stress. Efficiently repairs alkylated lesions in ribosomal DNA (rDNA). These lesions can cause ss- and dsDNA strand breaks that severely impair rDNA transcription. In a response mechanism to DNA damage, associates with PCNA at replication forks to repair alkylated adducts prior to replication. This is DNA oxidative demethylase ALKBH2 (ALKBH2) from Homo sapiens (Human).